The chain runs to 271 residues: Tryptophan synthase alpha chain (271 aa).

Active-site proton acceptor residues include Glu-49 and Asp-60.

The protein belongs to the TrpA family. As to quaternary structure, tetramer of two alpha and two beta chains.

It catalyses the reaction (1S,2R)-1-C-(indol-3-yl)glycerol 3-phosphate + L-serine = D-glyceraldehyde 3-phosphate + L-tryptophan + H2O. Its pathway is amino-acid biosynthesis; L-tryptophan biosynthesis; L-tryptophan from chorismate: step 5/5. In terms of biological role, the alpha subunit is responsible for the aldol cleavage of indoleglycerol phosphate to indole and glyceraldehyde 3-phosphate. The sequence is that of Tryptophan synthase alpha chain from Burkholderia thailandensis (strain ATCC 700388 / DSM 13276 / CCUG 48851 / CIP 106301 / E264).